The sequence spans 370 residues: 3-dehydroquinate synthase (370 aa).

Residues 112-116 (GVVGD), 136-137 (TS), Lys149, Lys158, and 176-179 (TLRT) each bind NAD(+). Zn(2+)-binding residues include Glu191, His254, and His276.

This sequence belongs to the sugar phosphate cyclases superfamily. Dehydroquinate synthase family. Requires Co(2+) as cofactor. Zn(2+) serves as cofactor. It depends on NAD(+) as a cofactor.

It is found in the cytoplasm. It catalyses the reaction 7-phospho-2-dehydro-3-deoxy-D-arabino-heptonate = 3-dehydroquinate + phosphate. It functions in the pathway metabolic intermediate biosynthesis; chorismate biosynthesis; chorismate from D-erythrose 4-phosphate and phosphoenolpyruvate: step 2/7. In terms of biological role, catalyzes the conversion of 3-deoxy-D-arabino-heptulosonate 7-phosphate (DAHP) to dehydroquinate (DHQ). The chain is 3-dehydroquinate synthase from Xanthomonas oryzae pv. oryzae (strain PXO99A).